An 86-amino-acid chain; its full sequence is Envelope glycoprotein N (86 aa).

A signal peptide spans 1-29 (MTLYKIVSKPIILLAFFFTRVVFTNEVDG). The Virion surface segment spans residues 30–47 (EELFYKPTCHSDTYEIIL). The helical transmembrane segment at 48–68 (KKFSSIWILVNTFILLCSFSL) threads the bilayer. Over 69–86 (FLKYWCFKTLAKETVKGY) the chain is Intravirion.

Belongs to the herpesviridae glycoprotein N family. In terms of assembly, interacts (via N-terminus) with gM (via N-terminus). The gM-gN heterodimer forms the gCII complex.

The protein localises to the virion membrane. It localises to the host membrane. Its subcellular location is the host Golgi apparatus. The protein resides in the host trans-Golgi network. Envelope glycoprotein necessary for proper maturation of gM and modulation of its membrane fusion activity. Also plays a critical role in virion morphogenesis. This chain is Envelope glycoprotein N, found in Homo sapiens (Human).